The sequence spans 166 residues: 6,7-dimethyl-8-ribityllumazine synthase (166 aa).

Residues phenylalanine 22, 56–58, and 80–82 contribute to the 5-amino-6-(D-ribitylamino)uracil site; these read SME and AVI. 85 to 86 serves as a coordination point for (2S)-2-hydroxy-3-oxobutyl phosphate; sequence ET. Catalysis depends on histidine 88, which acts as the Proton donor. Phenylalanine 113 lines the 5-amino-6-(D-ribitylamino)uracil pocket. Arginine 127 lines the (2S)-2-hydroxy-3-oxobutyl phosphate pocket.

This sequence belongs to the DMRL synthase family.

It catalyses the reaction (2S)-2-hydroxy-3-oxobutyl phosphate + 5-amino-6-(D-ribitylamino)uracil = 6,7-dimethyl-8-(1-D-ribityl)lumazine + phosphate + 2 H2O + H(+). It functions in the pathway cofactor biosynthesis; riboflavin biosynthesis; riboflavin from 2-hydroxy-3-oxobutyl phosphate and 5-amino-6-(D-ribitylamino)uracil: step 1/2. Catalyzes the formation of 6,7-dimethyl-8-ribityllumazine by condensation of 5-amino-6-(D-ribitylamino)uracil with 3,4-dihydroxy-2-butanone 4-phosphate. This is the penultimate step in the biosynthesis of riboflavin. The sequence is that of 6,7-dimethyl-8-ribityllumazine synthase from Thermotoga neapolitana (strain ATCC 49049 / DSM 4359 / NBRC 107923 / NS-E).